The primary structure comprises 263 residues: 4-hydroxy-tetrahydrodipicolinate reductase (263 aa).

Residues 8–13 (GACGRM), D34, 99–101 (GTT), and 125–128 (SPNY) contribute to the NAD(+) site. H157 (proton donor/acceptor) is an active-site residue. H158 serves as a coordination point for (S)-2,3,4,5-tetrahydrodipicolinate. K161 serves as the catalytic Proton donor. A (S)-2,3,4,5-tetrahydrodipicolinate-binding site is contributed by 167–168 (GT).

Belongs to the DapB family.

It localises to the cytoplasm. The catalysed reaction is (S)-2,3,4,5-tetrahydrodipicolinate + NAD(+) + H2O = (2S,4S)-4-hydroxy-2,3,4,5-tetrahydrodipicolinate + NADH + H(+). The enzyme catalyses (S)-2,3,4,5-tetrahydrodipicolinate + NADP(+) + H2O = (2S,4S)-4-hydroxy-2,3,4,5-tetrahydrodipicolinate + NADPH + H(+). Its pathway is amino-acid biosynthesis; L-lysine biosynthesis via DAP pathway; (S)-tetrahydrodipicolinate from L-aspartate: step 4/4. Functionally, catalyzes the conversion of 4-hydroxy-tetrahydrodipicolinate (HTPA) to tetrahydrodipicolinate. This Methanosarcina mazei (strain ATCC BAA-159 / DSM 3647 / Goe1 / Go1 / JCM 11833 / OCM 88) (Methanosarcina frisia) protein is 4-hydroxy-tetrahydrodipicolinate reductase.